The chain runs to 567 residues: Dihydroxy-acid dehydratase (567 aa).

Cys52 lines the [2Fe-2S] cluster pocket. Asp84 provides a ligand contact to Mg(2+). Position 125 (Cys125) interacts with [2Fe-2S] cluster. Positions 126 and 127 each coordinate Mg(2+). An N6-carboxylysine modification is found at Lys127. Cys197 is a binding site for [2Fe-2S] cluster. Residue Glu448 coordinates Mg(2+). Residue Ser474 is the Proton acceptor of the active site.

Belongs to the IlvD/Edd family. Homodimer. [2Fe-2S] cluster is required as a cofactor. It depends on Mg(2+) as a cofactor.

The enzyme catalyses (2R)-2,3-dihydroxy-3-methylbutanoate = 3-methyl-2-oxobutanoate + H2O. It catalyses the reaction (2R,3R)-2,3-dihydroxy-3-methylpentanoate = (S)-3-methyl-2-oxopentanoate + H2O. It functions in the pathway amino-acid biosynthesis; L-isoleucine biosynthesis; L-isoleucine from 2-oxobutanoate: step 3/4. The protein operates within amino-acid biosynthesis; L-valine biosynthesis; L-valine from pyruvate: step 3/4. Functionally, functions in the biosynthesis of branched-chain amino acids. Catalyzes the dehydration of (2R,3R)-2,3-dihydroxy-3-methylpentanoate (2,3-dihydroxy-3-methylvalerate) into 2-oxo-3-methylpentanoate (2-oxo-3-methylvalerate) and of (2R)-2,3-dihydroxy-3-methylbutanoate (2,3-dihydroxyisovalerate) into 2-oxo-3-methylbutanoate (2-oxoisovalerate), the penultimate precursor to L-isoleucine and L-valine, respectively. The chain is Dihydroxy-acid dehydratase from Streptococcus pneumoniae (strain CGSP14).